Here is a 491-residue protein sequence, read N- to C-terminus: 3-octaprenyl-4-hydroxybenzoate carboxy-lyase (491 aa).

Asn172 is a binding site for Mn(2+). Prenylated FMN contacts are provided by residues 175 to 177 (IYR), 189 to 191 (RWL), and 194 to 195 (RG). Residue Glu238 coordinates Mn(2+). Asp287 (proton donor) is an active-site residue.

The protein belongs to the UbiD family. As to quaternary structure, homohexamer. It depends on prenylated FMN as a cofactor. Mn(2+) serves as cofactor.

It localises to the cell membrane. The catalysed reaction is a 4-hydroxy-3-(all-trans-polyprenyl)benzoate + H(+) = a 2-(all-trans-polyprenyl)phenol + CO2. It participates in cofactor biosynthesis; ubiquinone biosynthesis. Functionally, catalyzes the decarboxylation of 3-octaprenyl-4-hydroxy benzoate to 2-octaprenylphenol, an intermediate step in ubiquinone biosynthesis. This Histophilus somni (strain 129Pt) (Haemophilus somnus) protein is 3-octaprenyl-4-hydroxybenzoate carboxy-lyase.